A 433-amino-acid chain; its full sequence is Deoxyguanosinetriphosphate triphosphohydrolase-like protein 2 (433 aa).

The HD domain occupies 61–248; the sequence is RLTHSLEVAQ…METADDIAYT (188 aa).

Belongs to the dGTPase family. Type 2 subfamily.

In Deinococcus radiodurans (strain ATCC 13939 / DSM 20539 / JCM 16871 / CCUG 27074 / LMG 4051 / NBRC 15346 / NCIMB 9279 / VKM B-1422 / R1), this protein is Deoxyguanosinetriphosphate triphosphohydrolase-like protein 2.